The sequence spans 1790 residues: Intracellular protein transport protein USO1 (1790 aa).

The interval 1–724 (MDIIQGLIQQ…LSHDPDEEPI (724 aa)) is globular head. ARM repeat units follow at residues 45–89 (AFSR…LFIR), 127–170 (QFSL…AVMA), 173–213 (PLKA…MAVV), 215–260 (DSPH…NILK), 261–312 (YNTS…VSLT), 314–362 (EPGN…NMVR), 363–429 (SNEH…LKAY), 431–512 (MDNF…PFKL), 543–584 (GNDL…LIYW), and 586–630 (FGDF…LGVA). A disordered region spans residues 452-484 (TNNVGDNAKENGGSNKSDKESDSDKDTDGKDGT). The tract at residues 465–487 (SNKSDKESDSDKDTDGKDGTEYE) is charged (hyper-hydrophilic). Residues 467–484 (KSDKESDSDKDTDGKDGT) show a composition bias toward basic and acidic residues. A coiled-coil region spans residues 725 to 1790 (NKISFEEVEK…EEDEEEGQVA (1066 aa)). The segment at 991-1790 (ESSIQLSNLQ…EEDEEEGQVA (800 aa)) is dispensable for the protein function. Disordered regions lie at residues 1185-1221 (EITS…SNLK), 1326-1351 (KEKS…EEQL), 1485-1547 (GLKK…EDIK), 1645-1667 (QELD…EVRK), 1722-1742 (DNLK…SEID), and 1762-1790 (LKDL…GQVA). The span at 1194–1209 (ESIKKKNDELEGEVKA) shows a compositional bias: basic and acidic residues. 4 stretches are compositionally biased toward basic and acidic residues: residues 1485-1512 (GLKK…KLES), 1519-1547 (TELK…EDIK), 1655-1667 (QKSE…EVRK), and 1722-1738 (DNLK…NEDR). Ser1770 is subject to Phosphoserine. Positions 1770–1790 (SSDEEDDEEDDEEDEEEGQVA) are enriched in acidic residues.

The protein belongs to the VDP/USO1/EDE1 family. In terms of assembly, homodimer. Dimerizes by parallel association of the tails, resulting in an elongated structure with two globular head domains side by side, and a long rod-like tail structure.

It localises to the cytoplasm. It is found in the cytoskeleton. The protein resides in the cytoplasmic vesicle membrane. Its subcellular location is the endoplasmic reticulum membrane. The protein localises to the golgi apparatus membrane. Its function is as follows. Required for protein transport from the ER to the Golgi complex. The sequence is that of Intracellular protein transport protein USO1 (USO1) from Saccharomyces cerevisiae (strain ATCC 204508 / S288c) (Baker's yeast).